The primary structure comprises 181 residues: 3-hydroxyacyl-[acyl-carrier-protein] dehydratase FabZ (181 aa).

His-54 is an active-site residue.

Belongs to the thioester dehydratase family. FabZ subfamily.

The protein localises to the cytoplasm. The enzyme catalyses a (3R)-hydroxyacyl-[ACP] = a (2E)-enoyl-[ACP] + H2O. Its function is as follows. Involved in unsaturated fatty acids biosynthesis. Catalyzes the dehydration of short chain beta-hydroxyacyl-ACPs and long chain saturated and unsaturated beta-hydroxyacyl-ACPs. This Yersinia pestis protein is 3-hydroxyacyl-[acyl-carrier-protein] dehydratase FabZ.